We begin with the raw amino-acid sequence, 258 residues long: MRPISATIKEIIDETPTIKTFRLDVDDWLHGKPGQYVMVWIRGVDEVPMTLSYDNAITVQKVGEATEALFKLKAGDSVGIRGPYGNGWEIVGDDILLISGGVGSAPLAPLGEKARRIGVNVTTLAGYRTKEEVHFEDRYRAAGELVVATDDGTYGKKGYVTDLLKSVDLKKFTQIYCCGPEKMMYRVLCALDEAGVAGLSQFSLQRYIKCGIGVCGSCCMDPDGLRVCRDGPVFDGETLLRSEMGKYARDASGRRQQI.

The region spanning 1–90 (MRPISATIKE…RGPYGNGWEI (90 aa)) is the FAD-binding FR-type domain. [2Fe-2S] cluster contacts are provided by Cys210, Cys215, Cys218, and Cys228.

The protein belongs to the PyrK family. As to quaternary structure, heterotetramer of 2 PyrK and 2 PyrD type B subunits. Requires [2Fe-2S] cluster as cofactor. It depends on FAD as a cofactor.

The protein operates within pyrimidine metabolism; UMP biosynthesis via de novo pathway; orotate from (S)-dihydroorotate (NAD(+) route): step 1/1. In terms of biological role, responsible for channeling the electrons from the oxidation of dihydroorotate from the FMN redox center in the PyrD type B subunit to the ultimate electron acceptor NAD(+). The protein is Probable dihydroorotate dehydrogenase B (NAD(+)), electron transfer subunit of Methanocella arvoryzae (strain DSM 22066 / NBRC 105507 / MRE50).